The primary structure comprises 513 residues: Solute carrier family 2, facilitated glucose transporter member 10 (513 aa).

At 1-6 (MGCSVL) the chain is on the cytoplasmic side. The chain crosses the membrane as a helical span at residues 7 to 27 (LLTITVSTLGGLVFGYELGII). The Extracellular portion of the chain corresponds to 28–46 (SGALPQLQTHFSLGCVQQE). A helical transmembrane segment spans residues 47-67 (AVVSALLIGSLFASIIGGWLI). Topologically, residues 68–80 (DRHGRRTSILLSN) are cytoplasmic. Residues 81–101 (LLILAGSVILTTGTSFFALVI) form a helical membrane-spanning segment. Residues 102-104 (GRA) lie on the Extracellular side of the membrane. A helical transmembrane segment spans residues 105 to 125 (VIGFAMTVSSMSCCIFVSEMV). The Cytoplasmic portion of the chain corresponds to 126–130 (TPERR). A helical membrane pass occupies residues 131-151 (GLMVTLYEVGITVGILIAYAV). Over 152-164 (NYIFNNVPLTGWR) the chain is Extracellular. The helical transmembrane segment at 165–185 (YMFGFAIIPSLIQLASIVLLP) threads the bilayer. The Cytoplasmic portion of the chain corresponds to 186-236 (KQAEVFVIHDDDSRQADRLTEETETSNQHQQSEKYGVSDLFKSKDNMRRRT). Residues 237-257 (VIGVGLVLSQQFTGQPNVLFY) form a helical membrane-spanning segment. Residue 246 to 247 (QQ) participates in D-glucose binding. Residues 258-272 (ASTILFSVGFQSNAS) lie on the Extracellular side of the membrane. N-linked (GlcNAc...) asparagine glycosylation is present at Asn270. A helical membrane pass occupies residues 273 to 293 (AILASVGFGIVKVIATLLAML). Residues 294–301 (CSDRAGRR) lie on the Cytoplasmic side of the membrane. Residues 302–322 (SLLIGGCSMLAVGLILTGFLC) form a helical membrane-spanning segment. Over 323-376 (RQSVIDTTKRCTSVGPHSNLTLSAEHDEGVGFSSQTLDVHEHLRSFSQSEDIYK) the chain is Extracellular. A glycan (N-linked (GlcNAc...) asparagine) is linked at Asn341. A helical membrane pass occupies residues 377–397 (WIIFTCLMAVVSAFSVSFGPM). Topologically, residues 398–422 (TWVVLSEIFPKDIRGRAFSFINCFN) are cytoplasmic. Trp399 provides a ligand contact to D-glucose. 2 helical membrane-spanning segments follow: residues 423–443 (VGAN…IGLS) and 444–464 (GVFL…YLVL). Residues 465–513 (PETKGKSLQDIDRELSQTRMIHRQELCSIFQRRRFSPGYQRVQLTSTAT) are Cytoplasmic-facing.

The protein belongs to the major facilitator superfamily. Sugar transporter (TC 2.A.1.1) family. Glucose transporter subfamily.

The protein localises to the endomembrane system. Its subcellular location is the cytoplasm. The protein resides in the perinuclear region. The catalysed reaction is D-glucose(out) = D-glucose(in). Its function is as follows. Facilitative glucose transporter required for the development of the cardiovascular system. The chain is Solute carrier family 2, facilitated glucose transporter member 10 from Danio rerio (Zebrafish).